We begin with the raw amino-acid sequence, 307 residues long: tRNA dimethylallyltransferase (307 aa).

Residue 16-23 (GCTAVGKT) coordinates ATP. 18 to 23 (TAVGKT) contacts substrate. The tract at residues 41-44 (DSLL) is interaction with substrate tRNA.

It belongs to the IPP transferase family. Monomer. Requires Mg(2+) as cofactor.

The catalysed reaction is adenosine(37) in tRNA + dimethylallyl diphosphate = N(6)-dimethylallyladenosine(37) in tRNA + diphosphate. Its function is as follows. Catalyzes the transfer of a dimethylallyl group onto the adenine at position 37 in tRNAs that read codons beginning with uridine, leading to the formation of N6-(dimethylallyl)adenosine (i(6)A). In Opitutus terrae (strain DSM 11246 / JCM 15787 / PB90-1), this protein is tRNA dimethylallyltransferase.